The following is an 803-amino-acid chain: Nucleoporin nup82 (803 aa).

As to quaternary structure, component of the nuclear pore complex (NPC). NPC constitutes the exclusive means of nucleocytoplasmic transport. NPCs allow the passive diffusion of ions and small molecules and the active, nuclear transport receptor-mediated bidirectional transport of macromolecules such as proteins, RNAs, ribonucleoparticles (RNPs), and ribosomal subunits across the nuclear envelope.

Its subcellular location is the nucleus. It is found in the nuclear pore complex. The protein resides in the nucleus membrane. Functions as a component of the nuclear pore complex (NPC). NPC components, collectively referred to as nucleoporins (NUPs), can play the role of both NPC structural components and of docking or interaction partners for transiently associated nuclear transport factors. This Schizosaccharomyces pombe (strain 972 / ATCC 24843) (Fission yeast) protein is Nucleoporin nup82.